The following is a 353-amino-acid chain: Photosystem II protein D1 (353 aa).

Residue Thr2 is modified to N-acetylthreonine. Thr2 carries the phosphothreonine modification. Transmembrane regions (helical) follow at residues 29–46 (YIGWFGVLMIPTLLTATS), 118–133 (HFLLGVACYMGREWEL), and 142–156 (WIAVAYSAPVAAATA). A chlorophyll a-binding site is contributed by His118. A pheophytin a-binding site is contributed by Tyr126. Residues Asp170 and Glu189 each coordinate [CaMn4O5] cluster. Residues 197 to 218 (FHMLGVAGVFGGSLFSAMHGSL) traverse the membrane as a helical segment. His198 contributes to the chlorophyll a binding site. Residues His215 and 264-265 (SF) contribute to the a quinone site. His215 provides a ligand contact to Fe cation. A Fe cation-binding site is contributed by His272. A helical transmembrane segment spans residues 274–288 (FLAAWPVAGIWFTAL). The [CaMn4O5] cluster site is built by His332, Glu333, Asp342, and Ala344. Positions 345 to 353 (AVESISIGG) are excised as a propeptide.

It belongs to the reaction center PufL/M/PsbA/D family. PSII is composed of 1 copy each of membrane proteins PsbA, PsbB, PsbC, PsbD, PsbE, PsbF, PsbH, PsbI, PsbJ, PsbK, PsbL, PsbM, PsbT, PsbX, PsbY, PsbZ, Psb30/Ycf12, at least 3 peripheral proteins of the oxygen-evolving complex and a large number of cofactors. It forms dimeric complexes. It depends on The D1/D2 heterodimer binds P680, chlorophylls that are the primary electron donor of PSII, and subsequent electron acceptors. It shares a non-heme iron and each subunit binds pheophytin, quinone, additional chlorophylls, carotenoids and lipids. D1 provides most of the ligands for the Mn4-Ca-O5 cluster of the oxygen-evolving complex (OEC). There is also a Cl(-1) ion associated with D1 and D2, which is required for oxygen evolution. The PSII complex binds additional chlorophylls, carotenoids and specific lipids. as a cofactor. Tyr-161 forms a radical intermediate that is referred to as redox-active TyrZ, YZ or Y-Z. Post-translationally, C-terminally processed by CTPA; processing is essential to allow assembly of the oxygen-evolving complex and thus photosynthetic growth.

The protein localises to the plastid. Its subcellular location is the chloroplast thylakoid membrane. The catalysed reaction is 2 a plastoquinone + 4 hnu + 2 H2O = 2 a plastoquinol + O2. In terms of biological role, photosystem II (PSII) is a light-driven water:plastoquinone oxidoreductase that uses light energy to abstract electrons from H(2)O, generating O(2) and a proton gradient subsequently used for ATP formation. It consists of a core antenna complex that captures photons, and an electron transfer chain that converts photonic excitation into a charge separation. The D1/D2 (PsbA/PsbD) reaction center heterodimer binds P680, the primary electron donor of PSII as well as several subsequent electron acceptors. The sequence is that of Photosystem II protein D1 from Pinus koraiensis (Korean pine).